Reading from the N-terminus, the 111-residue chain is C-X-C motif chemokine 14 (111 aa).

Positions 1 to 34 (MSLLPRRAPPVSMRLLAAALLLLLLALYTARVDG) are cleaved as a signal peptide. 2 disulfides stabilise this stretch: cysteine 37-cysteine 63 and cysteine 39-cysteine 84. Positions 67 to 81 (MVIITTKSVSRYRGQ) match the D-box motif.

It belongs to the intercrine alpha (chemokine CxC) family. Ubiquitinated, followed by degradation by the proteasome. As to expression, expressed in heart, brain, placenta, lung, liver, skeletal muscle, kidney and pancreas. Highly expressed in normal tissue without inflammatory stimuli and infrequently expressed in cancer cell lines. Weakly expressed in monocyte-derived dendritic cells. Not detected in lung or unstimulated peripheral blood lymphocytes.

Its subcellular location is the secreted. Its function is as follows. Potent chemoattractant for neutrophils, and weaker for dendritic cells. Not chemotactic for T-cells, B-cells, monocytes, natural killer cells or granulocytes. Does not inhibit proliferation of myeloid progenitors in colony formation assays. The polypeptide is C-X-C motif chemokine 14 (CXCL14) (Homo sapiens (Human)).